Here is a 480-residue protein sequence, read N- to C-terminus: UDP-N-acetylmuramate--L-alanine ligase (480 aa).

122–128 (GTHGKTT) is an ATP binding site.

This sequence belongs to the MurCDEF family.

Its subcellular location is the cytoplasm. It catalyses the reaction UDP-N-acetyl-alpha-D-muramate + L-alanine + ATP = UDP-N-acetyl-alpha-D-muramoyl-L-alanine + ADP + phosphate + H(+). Its pathway is cell wall biogenesis; peptidoglycan biosynthesis. Functionally, cell wall formation. In Pseudomonas aeruginosa (strain LESB58), this protein is UDP-N-acetylmuramate--L-alanine ligase.